The chain runs to 367 residues: MERKKKKVIVGLSGGVDSSVAACMLVREGYEVLGLHLKVLQEGDGSTVLEPSPMTISSREEFHIPVFTLNLAARFRNEVMDYFKEEYLAARTPNPCMVCNKTIKWRGLLEGAAQLGADMVATGHYARTAFIDGRHRLFAGLDRKKDQSYFLWMLAQEELSRTILPLGGLTKPEVRDLARSFGLTAAEKKESQEICFVPDDDYGSYLESAVPGLHRRVEGGEILDPSGQVIGHHKGYPFYTIGQRRGLGTATGEPLYVTAIDPIGNLVHTGPKSALFSTSVEVSHLNWIGIDPPFAPMEATAKIRYRDHASPCTIIPLGPGPTGVTARIMFKEPKSALTPGQAAVFYRGEEVLGGGIIEGALPMEPHP.

Residues 11-18 and L37 contribute to the ATP site; that span reads GLSGGVDS. C99 (nucleophile) is an active-site residue. Residues C99 and C195 are joined by a disulfide bond. An ATP-binding site is contributed by G123. Residues 145–147 are interaction with tRNA; it reads KDQ. The active-site Cysteine persulfide intermediate is the C195. The interval 304 to 305 is interaction with tRNA; that stretch reads RY.

It belongs to the MnmA/TRMU family.

The protein localises to the cytoplasm. The enzyme catalyses S-sulfanyl-L-cysteinyl-[protein] + uridine(34) in tRNA + AH2 + ATP = 2-thiouridine(34) in tRNA + L-cysteinyl-[protein] + A + AMP + diphosphate + H(+). In terms of biological role, catalyzes the 2-thiolation of uridine at the wobble position (U34) of tRNA, leading to the formation of s(2)U34. This chain is tRNA-specific 2-thiouridylase MnmA, found in Chlorobium luteolum (strain DSM 273 / BCRC 81028 / 2530) (Pelodictyon luteolum).